An 878-amino-acid chain; its full sequence is Leucine--tRNA ligase (878 aa).

The span at 1–14 (MTASKSSSATASAS) shows a compositional bias: low complexity. Positions 1–23 (MTASKSSSATASASDRPDRYDPI) are disordered. Residues 58-68 (PYPSGSLHMGH) carry the 'HIGH' region motif. A 'KMSKS' region motif is present at residues 632 to 636 (KMSKS). Residue Lys-635 coordinates ATP.

It belongs to the class-I aminoacyl-tRNA synthetase family.

Its subcellular location is the cytoplasm. It catalyses the reaction tRNA(Leu) + L-leucine + ATP = L-leucyl-tRNA(Leu) + AMP + diphosphate. The polypeptide is Leucine--tRNA ligase (Synechococcus sp. (strain WH7803)).